Here is a 1127-residue protein sequence, read N- to C-terminus: MASKGILKNGGKPPTAPSSAAPTVVFGRRTDSGRFISYSRDDLDSEISSVDFQDYHVHIPMTPDNQPMDPAAGDEQQYVSSSLFTGGFNSVTRAHVMEKQASSARATVSACMVQGCGSKIMRNGRGADILPCECDFKICVDCFTDAVKGGGGVCPGCKEPYKHAEWEEVVSASNHDAINRALSLPHGHGHGPKMERRLSLVKQNGGAPGEFDHNRWLFETKGTYGYGNAIWPEDDGVAGHPKELMSKPWRPLTRKLRIQAAVISPYRLLVLIRLVALGLFLMWRIKHQNEDAIWLWGMSIVCELWFALSWVLDQLPKLCPINRATDLSVLKDKFETPTPSNPTGKSDLPGIDIFVSTADPEKEPVLVTANTILSILAADYPVDKLACYVSDDGGALLTFEAMAEAASFANLWVPFCRKHEIEPRNPDSYFNLKRDPFKNKVKGDFVKDRRRVKREYDEFKVRVNGLPDAIRRRSDAYHAREEIQAMNLQREKMKAGGDEQQLEPIKIPKATWMADGTHWPGTWLQASPEHARGDHAGIIQVMLKPPSPSPSSSGGDMEKRVDLSGVDTRLPMLVYVSREKRPGYDHNKKAGAMNALVRASAIMSNGPFILNLDCDHYVYNSKAFREGMCFMMDRGGDRLCYVQFPQRFEGIDPSDRYANHNTVFFDVNMRALDGLQGPVYVGTGCLFRRIALYGFDPPRSKDHTTPWSCCLPRRRRTRSQPQPQEEEEETMALRMDMDGAMNMASFPKKFGNSSFLIDSIPVAEFQGRPLADHPSVKNGRPPGALTIPRETLDASIVAEAISVVSCWYEEKTEWGTRVGWIYGSVTEDVVTGYRMHNRGWKSVYCVTHRDAFRGTAPINLTDRLHQVLRWATGSVEIFFSRNNALFASSKMKVLQRIAYLNVGIYPFTSVFLIVYCFLPALSLFSGQFIVQTLNVTFLTYLLIITITLCLLAMLEIKWSGIALEEWWRNEQFWLIGGTSAHLAAVLQGLLKVIAGIEISFTLTSKQLGDDVDDEFAELYAVKWTSLMIPPLTIIMINLVAIAVGFSRTIYSTIPQWSKLLGGVFFSFWVLAHLYPFAKGLMGRRGRTPTIVYVWSGLVAITISLLWIAIKPPSAQANSQLGGSFSFP.

Residues 1 to 24 are disordered; that stretch reads MASKGILKNGGKPPTAPSSAAPTV. A run of 2 helical transmembrane segments spans residues 262 to 282 and 292 to 312; these read VISP…LFLM and AIWL…SWVL. Catalysis depends on residues Asp392 and Asp828. A run of 6 helical transmembrane segments spans residues 910 to 930, 936 to 956, 982 to 1002, 1025 to 1045, 1059 to 1079, and 1089 to 1109; these read VFLI…QFIV, TFLT…MLEI, LAAV…SFTL, SLMI…AVGF, LLGG…FAKG, and TIVY…WIAI.

It belongs to the glycosyltransferase 2 family. Plant cellulose synthase-like D subfamily.

Its subcellular location is the golgi apparatus membrane. Its function is as follows. Thought to be a Golgi-localized beta-glycan synthase that polymerize the backbones of noncellulosic polysaccharides (hemicelluloses) of plant cell wall. The chain is Cellulose synthase-like protein D1 (CSLD1) from Oryza sativa subsp. indica (Rice).